Consider the following 237-residue polypeptide: Endoglucanase-1 (237 aa).

A signal peptide spans 1–16; that stretch reads MKAFHLLAALAGAAVA. Gln-17 carries the pyrrolidone carboxylic acid modification.

The protein belongs to the glycosyl hydrolase 12 (cellulase H) family.

The protein localises to the secreted. It catalyses the reaction Endohydrolysis of (1-&gt;4)-beta-D-glucosidic linkages in cellulose, lichenin and cereal beta-D-glucans.. The protein is Endoglucanase-1 of Aspergillus aculeatus.